The sequence spans 202 residues: Glycerol-3-phosphate acyltransferase (202 aa).

4 helical membrane-spanning segments follow: residues 1 to 21 (MTLI…FGVL), 84 to 104 (AVAA…FLHF), 116 to 136 (ILLG…LAVA), and 143 to 163 (SLAA…FLGF).

This sequence belongs to the PlsY family. Probably interacts with PlsX.

It is found in the cell inner membrane. It carries out the reaction an acyl phosphate + sn-glycerol 3-phosphate = a 1-acyl-sn-glycero-3-phosphate + phosphate. Its pathway is lipid metabolism; phospholipid metabolism. Functionally, catalyzes the transfer of an acyl group from acyl-phosphate (acyl-PO(4)) to glycerol-3-phosphate (G3P) to form lysophosphatidic acid (LPA). This enzyme utilizes acyl-phosphate as fatty acyl donor, but not acyl-CoA or acyl-ACP. The polypeptide is Glycerol-3-phosphate acyltransferase (Nitrosospira multiformis (strain ATCC 25196 / NCIMB 11849 / C 71)).